The following is a 318-amino-acid chain: CRISPR-associated protein Cas7/Csa2 1 (318 aa).

It belongs to the CRISPR-associated protein Cas7/Cst2/DevR family. Subtype I-a/Apern subfamily. In terms of assembly, part of the aCascade ribonucleoprotein complex, minimally composed of Csa2 and Cas5a, which binds crRNA. Other possible components of aCascade in strain P1 are Cas6b (SSO1437) and Csa5 (SSO1443), while SSO1399, Cas5b (SSO1400) and SSO1401 have sometimes been seen weakly associated. Csa2 is probably the major RNA-binding subunit. The Csa2-Cas5a-crRNA complex also binds target DNA homologous to crRNA, probably forming an R-loop. Purified aCascade forms a filament about 6 nm in width.

In terms of biological role, CRISPR (clustered regularly interspaced short palindromic repeat) is an adaptive immune system that provides protection against mobile genetic elements (viruses, transposable elements and conjugative plasmids). CRISPR clusters contain spacers, sequences complementary to antecedent mobile elements, and target invading nucleic acids. CRISPR clusters are transcribed and processed into CRISPR RNA (crRNA). The chain is CRISPR-associated protein Cas7/Csa2 1 (cas7a) from Saccharolobus solfataricus (strain ATCC 35092 / DSM 1617 / JCM 11322 / P2) (Sulfolobus solfataricus).